A 91-amino-acid chain; its full sequence is ATP synthase subunit c (91 aa).

2 helical membrane-spanning segments follow: residues F4–I24 and I53–L73.

It belongs to the ATPase C chain family. As to quaternary structure, F-type ATPases have 2 components, F(1) - the catalytic core - and F(0) - the membrane proton channel. F(1) has five subunits: alpha(3), beta(3), gamma(1), delta(1), epsilon(1). F(0) has three main subunits: a(1), b(2) and c(10-14). The alpha and beta chains form an alternating ring which encloses part of the gamma chain. F(1) is attached to F(0) by a central stalk formed by the gamma and epsilon chains, while a peripheral stalk is formed by the delta and b chains.

Its subcellular location is the cell inner membrane. In terms of biological role, f(1)F(0) ATP synthase produces ATP from ADP in the presence of a proton or sodium gradient. F-type ATPases consist of two structural domains, F(1) containing the extramembraneous catalytic core and F(0) containing the membrane proton channel, linked together by a central stalk and a peripheral stalk. During catalysis, ATP synthesis in the catalytic domain of F(1) is coupled via a rotary mechanism of the central stalk subunits to proton translocation. Key component of the F(0) channel; it plays a direct role in translocation across the membrane. A homomeric c-ring of between 10-14 subunits forms the central stalk rotor element with the F(1) delta and epsilon subunits. In Trichlorobacter lovleyi (strain ATCC BAA-1151 / DSM 17278 / SZ) (Geobacter lovleyi), this protein is ATP synthase subunit c.